The following is a 99-amino-acid chain: MKFFAIAALFAGALAMPTTEIEARTDKAVCPSGLYSNLVCADVDVLGILCLHATSPSETPRDARHFQEICAKVGKQARCAVLPVAEQAVLCQRPAGVSA.

An N-terminal signal peptide occupies residues 1-15 (MKFFAIAALFAGALA). 2 cysteine pairs are disulfide-bonded: Cys-30–Cys-79 and Cys-40–Cys-70.

The protein belongs to the cerato-ulmin hydrophobin family.

It localises to the secreted. It is found in the cell wall. The protein resides in the vacuole. The protein localises to the cytoplasmic vesicle. In terms of biological role, aerial growth, conidiation, and dispersal of filamentous fungi in the environment rely upon a capability of their secreting small amphipathic proteins called hydrophobins (HPBs) with low sequence identity. Class I can self-assemble into an outermost layer of rodlet bundles on aerial cell surfaces, conferring cellular hydrophobicity that supports fungal growth, development and dispersal; whereas Class II form highly ordered films at water-air interfaces through intermolecular interactions but contribute nothing to the rodlet structure. Hyd2B contributes to certain cell wall-related features, such as hydrophobicity but is not involved in cell wall-related events during fungal proliferation in host hemocoel. Does not contribute to conidial hydrophobicity. Involved in insect hemocoel colonization independent of cell hydrophobicity. The polypeptide is Class II hydrophobin B (Beauveria bassiana (strain ARSEF 2860) (White muscardine disease fungus)).